Reading from the N-terminus, the 472-residue chain is METNIVEVENFVQQSEERRGSAFTQEVKRYLERYPNTQYVDVLLTDLNGCFRGKRIPVSSLKKLEKGCYFPASVFAMDILGNVVEEAGLGQEMGEPDRTCVPVLGSLTPSAADPEFIGQMLLTMVDEDGAPFDVEPRNVLNRLWQQLRQRGLFPVVAVELEFYLLDRQRDAEGYLQPPCAPGTDDRNTQSQVYSVDNLNHFADVLNDIDELAQLQLIPADGAVAEASPGQFEINLYHTDNVLEACDDALALKRLVRLMAEKHKMHATFMAKPYEEHAGSGMHIHISMQNNRGENVLSDAEGEDSPLLKKMLAGMIDLMPSSMALLAPNVNSYRRFQPGMYVPTQASWGHNNRTVALRIPCGDRHNHRVEYRVAGADANPYLVMAAIFAGILHGLDNELPLQEEVEGNGLEQEGLPFPIRQSDALGEFIENDHLRRYLGERFCHVYHACKNDELLQFERLITETEIEWMLKNA.

In terms of domain architecture, GS beta-grasp spans 35–129 (PNTQYVDVLL…MLLTMVDEDG (95 aa)). Positions 136–472 (PRNVLNRLWQ…TEIEWMLKNA (337 aa)) constitute a GS catalytic domain.

Belongs to the glutamine synthetase family. As to quaternary structure, dodecamer. Mg(2+) serves as cofactor. Mn(2+) is required as a cofactor.

The catalysed reaction is putrescine + L-glutamate + ATP = gamma-L-glutamylputrescine + ADP + phosphate + H(+). The protein operates within amine and polyamine degradation; putrescine degradation; 4-aminobutanoate from putrescine: step 1/4. Involved in the breakdown of putrescine. Catalyzes the ATP-dependent gamma-glutamylation of putrescine, producing gamma-L-glutamylputrescine. Absolutely essential to utilize putrescine as both nitrogen and carbon sources and to decrease the toxicity of putrescine, which can lead to inhibition of cell growth and protein synthesis. In vitro is also able to use several diamines, and spermidine and spermine, instead of putrescine, but with a much lower activity, and cannot catalyze the gamma-glutamylation of ornithine or GABA. The polypeptide is Gamma-glutamylputrescine synthetase PuuA (Escherichia coli (strain K12)).